The following is a 196-amino-acid chain: Phosphoheptose isomerase (196 aa).

Residues 34–196 (MVQCLLGGKK…DRTLFPQDEA (163 aa)) enclose the SIS domain. 49-51 (NGG) is a binding site for substrate. Residues histidine 58 and glutamate 62 each contribute to the Zn(2+) site. Substrate is bound by residues glutamate 62, 91-92 (ND), 117-119 (STS), serine 122, and glutamine 172. The Zn(2+) site is built by glutamine 172 and histidine 180.

Belongs to the SIS family. GmhA subfamily. Homotetramer. The cofactor is Zn(2+).

The protein resides in the cytoplasm. The enzyme catalyses 2 D-sedoheptulose 7-phosphate = D-glycero-alpha-D-manno-heptose 7-phosphate + D-glycero-beta-D-manno-heptose 7-phosphate. The protein operates within carbohydrate biosynthesis; D-glycero-D-manno-heptose 7-phosphate biosynthesis; D-glycero-alpha-D-manno-heptose 7-phosphate and D-glycero-beta-D-manno-heptose 7-phosphate from sedoheptulose 7-phosphate: step 1/1. In terms of biological role, catalyzes the isomerization of sedoheptulose 7-phosphate in D-glycero-D-manno-heptose 7-phosphate. This chain is Phosphoheptose isomerase, found in Shewanella denitrificans (strain OS217 / ATCC BAA-1090 / DSM 15013).